The sequence spans 294 residues: Arsenical-resistance protein ARR1 (294 aa).

The segment covering 1–11 has biased composition (basic residues); that stretch reads MAKPRGRKGGR. The tract at residues 1–29 is disordered; sequence MAKPRGRKGGRKPSLTPPKNKRAAQLRAS. Positions 22 to 45 are basic motif; it reads RAAQLRASQNAFRKRKLERLEELE. In terms of domain architecture, bZIP spans 22–72; that stretch reads RAAQLRASQNAFRKRKLERLEELEKKEAQLTVTNDQIHILKKENELLHFML. Residues 44 to 72 are leucine-zipper; sequence LEKKEAQLTVTNDQIHILKKENELLHFML. Arsenite-binding residues include C132, C137, and C274.

Belongs to the bZIP family. YAP subfamily. In terms of assembly, homodimer. Post-translationally, phosphorylation by HOG1 promotes nuclear localization in the presence of arsenic.

The protein resides in the cytoplasm. The protein localises to the nucleus. Its activity is regulated as follows. Transcriptional activity is controlled by regulated degradation by the ubiquitin-proteasome pathway in absence of arsenic. Arsenic-exposure results in stabilization and increased transcriptional activity. Functionally, transcription activator required for resistance to arsenic compounds and for a regulated expression of ACR2, ACR3 and YCF1. The polypeptide is Arsenical-resistance protein ARR1 (Saccharomyces cerevisiae (strain ATCC 204508 / S288c) (Baker's yeast)).